Here is a 1035-residue protein sequence, read N- to C-terminus: Ephrin type-A receptor 6 (1035 aa).

The first 22 residues, 1–22 (MGGCEVREFLLQFGFFLPLLTA), serve as a signal peptide directing secretion. Topologically, residues 23–549 (WTGDCSHVSN…MAAEQGQILV (527 aa)) are extracellular. Residues 33-211 (QVVLLDTSTV…FYKKCPFTVR (179 aa)) form the Eph LBD domain. 2 Fibronectin type-III domains span residues 330-440 (PPSA…TDQD) and 441-536 (APSL…TGDE). N-linked (GlcNAc...) asparagine glycosylation is found at N342, N396, and N409. A helical transmembrane segment spans residues 550–570 (IATAAVGGFTLLVILTLFFLI). Residues 571–1035 (TGRCQWYIKA…MHIQEKGFHV (465 aa)) lie on the Cytoplasmic side of the membrane. Y605 and Y611 each carry phosphotyrosine; by autocatalysis. The 314-residue stretch at 630-943 (IRIERVIGAG…RNPSALHTLV (314 aa)) folds into the Protein kinase domain. ATP-binding positions include 636–644 (IGAGEFGEV) and K662. D797 functions as the Proton acceptor in the catalytic mechanism. Y830 and Y977 each carry phosphotyrosine; by autocatalysis. The SAM domain occupies 960–1024 (PLFVTVGDWL…VSSIQTLRLH (65 aa)). The PDZ-binding signature appears at 1033–1035 (FHV).

This sequence belongs to the protein kinase superfamily. Tyr protein kinase family. Ephrin receptor subfamily. Heterotetramer upon binding of the ligand. The heterotetramer is composed of an ephrin dimer and a receptor dimer. Oligomerization is probably required to induce biological responses. Interacts (via SAM domain) with ANKS1A (via SAM domain). Brain.

The protein localises to the membrane. It carries out the reaction L-tyrosyl-[protein] + ATP = O-phospho-L-tyrosyl-[protein] + ADP + H(+). Receptor tyrosine kinase which binds promiscuously GPI-anchored ephrin-A family ligands residing on adjacent cells, leading to contact-dependent bidirectional signaling into neighboring cells. The signaling pathway downstream of the receptor is referred to as forward signaling while the signaling pathway downstream of the ephrin ligand is referred to as reverse signaling. The polypeptide is Ephrin type-A receptor 6 (Epha6) (Rattus norvegicus (Rat)).